Consider the following 1099-residue polypeptide: Solute carrier family 12 member 1 (1099 aa).

Residues 1-177 lie on the Cytoplasmic side of the membrane; the sequence is MSLNNSSNVF…EDDQAGVVKF (177 aa). The RFXV motif motif lies at 20 to 23; sequence RFQV. Positions 31–53 are disordered; it reads ESSAAADDNTDPPHYEETSFGDE. Position 61 is a phosphoserine (S61). S91 is modified (phosphoserine; by OXSR1 and STK39). The residue at position 95 (T95) is a Phosphothreonine. Phosphothreonine; by OXSR1 and STK39 is present on residues T100 and T105. Phosphothreonine is present on T118. Position 120 is a phosphoserine (S120). At S130 the chain carries Phosphoserine; by AMPK. The residue at position 148 (S148) is a Phosphoserine. A helical transmembrane segment spans residues 178–198; sequence GWVKGVLVRCMLNIWGVMLFI. The Extracellular portion of the chain corresponds to 199-201; it reads RLS. Residues 202 to 222 form a helical membrane-spanning segment; that stretch reads WIVGEAGIGLGVLIILLSTMV. Residues 223 to 259 are Cytoplasmic-facing; that stretch reads TSITGLSTSAIATNGFVRGGGAYYLISRSLGPEFGGS. The chain crosses the membrane as a helical span at residues 260–280; the sequence is IGLIFAFANAVAVAMYVVGFA. Topologically, residues 281 to 302 are extracellular; the sequence is ETVVDLLKESDSMMVDPTNDIR. A helical transmembrane segment spans residues 303-323; it reads IIGSITVVILLGISVAGMEWE. Topologically, residues 324–327 are cytoplasmic; it reads AKAQ. A helical transmembrane segment spans residues 328–348; sequence VILLVILLIAIANFFIGTVIP. Residues 349-379 are Extracellular-facing; it reads SNNEKKSRGFFNYQASIFAENFGPRFTKGEG. A helical membrane pass occupies residues 380–400; it reads FFSVFAIFFPAATGILAGANI. The Cytoplasmic portion of the chain corresponds to 401 to 417; that stretch reads SGDLEDPQDAIPRGTML. The chain crosses the membrane as a helical span at residues 418–438; the sequence is AIFITTVAYLGVAICVGACVV. At 439-550 the chain is on the extracellular side; the sequence is RDATGNMNDT…NNEPLRGYIL (112 aa). N-linked (GlcNAc...) asparagine glycosylation is found at N446 and N456. A run of 2 helical transmembrane segments spans residues 551–571 and 572–592; these read TFLI…APII and SNFF…ASYA. The Extracellular portion of the chain corresponds to 593–609; sequence KSPGWRPAYGIYNMWVS. A helical transmembrane segment spans residues 610-630; sequence LFGAVLCCAVMFVINWWAAVI. The Cytoplasmic portion of the chain corresponds to 631 to 1099; sequence TYVIEFFLYV…NHKNVLTFYS (469 aa).

Belongs to the SLC12A transporter family. As to quaternary structure, when phosphorylated, interacts with PPP3CB. Post-translationally, phosphorylated at Ser-91, Thr-100 and Thr-105 by OXSR1/OSR1 and STK39/SPAK downstream of WNK kinases (WNK1, WNK2, WNK3 or WNK4), promoting its activity. Kidney; localizes to the thick ascending limbs (at protein level).

It localises to the apical cell membrane. It carries out the reaction K(+)(out) + 2 chloride(out) + Na(+)(out) = K(+)(in) + 2 chloride(in) + Na(+)(in). With respect to regulation, activated following phosphorylation by OXSR1/OSR1 and STK39/SPAK downstream of WNK kinases (WNK1, WNK2, WNK3 or WNK4). Its function is as follows. Renal sodium, potassium and chloride ion cotransporter that mediates the transepithelial NaCl reabsorption in the thick ascending limb and plays an essential role in the urinary concentration and volume regulation. Electrically silent transporter system. The protein is Solute carrier family 12 member 1 (SLC12A1) of Homo sapiens (Human).